The following is a 680-amino-acid chain: DNA ligase (680 aa).

Residues 35–39, 86–87, and Glu-111 each bind NAD(+); these read DADFD and SL. The active-site N6-AMP-lysine intermediate is the Lys-113. NAD(+)-binding residues include Arg-134, Glu-174, Lys-290, and Lys-314. Zn(2+)-binding residues include Cys-408, Cys-411, Cys-427, and Cys-433. In terms of domain architecture, BRCT spans 597 to 680; it reads VAEQTLEGLT…RLLNTGSADE (84 aa).

This sequence belongs to the NAD-dependent DNA ligase family. LigA subfamily. Requires Mg(2+) as cofactor. Mn(2+) is required as a cofactor.

It carries out the reaction NAD(+) + (deoxyribonucleotide)n-3'-hydroxyl + 5'-phospho-(deoxyribonucleotide)m = (deoxyribonucleotide)n+m + AMP + beta-nicotinamide D-nucleotide.. Its function is as follows. DNA ligase that catalyzes the formation of phosphodiester linkages between 5'-phosphoryl and 3'-hydroxyl groups in double-stranded DNA using NAD as a coenzyme and as the energy source for the reaction. It is essential for DNA replication and repair of damaged DNA. This chain is DNA ligase, found in Corynebacterium glutamicum (strain ATCC 13032 / DSM 20300 / JCM 1318 / BCRC 11384 / CCUG 27702 / LMG 3730 / NBRC 12168 / NCIMB 10025 / NRRL B-2784 / 534).